Consider the following 147-residue polypeptide: Large ribosomal subunit protein uL13 (147 aa).

Belongs to the universal ribosomal protein uL13 family. In terms of assembly, part of the 50S ribosomal subunit.

In terms of biological role, this protein is one of the early assembly proteins of the 50S ribosomal subunit, although it is not seen to bind rRNA by itself. It is important during the early stages of 50S assembly. This is Large ribosomal subunit protein uL13 from Pediococcus pentosaceus (strain ATCC 25745 / CCUG 21536 / LMG 10740 / 183-1w).